The chain runs to 151 residues: Superoxide dismutase [Cu-Zn] 4 (151 aa).

Positions 45, 47, and 62 each coordinate Cu cation. Cys-56 and Cys-145 are oxidised to a cystine. 4 residues coordinate Zn(2+): His-62, His-70, His-79, and Asp-82. His-120 provides a ligand contact to Cu cation.

The protein belongs to the Cu-Zn superoxide dismutase family. As to quaternary structure, homodimer. Cu cation serves as cofactor. Zn(2+) is required as a cofactor.

It localises to the cytoplasm. It carries out the reaction 2 superoxide + 2 H(+) = H2O2 + O2. Its function is as follows. Destroys radicals which are normally produced within the cells and which are toxic to biological systems. Protects spores from cellular damage caused by UV LIGHT. The polypeptide is Superoxide dismutase [Cu-Zn] 4 (sodD) (Dictyostelium discoideum (Social amoeba)).